A 926-amino-acid chain; its full sequence is Alanine--tRNA ligase (926 aa).

Zn(2+) contacts are provided by histidine 577, histidine 581, cysteine 680, and histidine 684.

This sequence belongs to the class-II aminoacyl-tRNA synthetase family. Requires Zn(2+) as cofactor.

Its subcellular location is the cytoplasm. It catalyses the reaction tRNA(Ala) + L-alanine + ATP = L-alanyl-tRNA(Ala) + AMP + diphosphate. Functionally, catalyzes the attachment of alanine to tRNA(Ala) in a two-step reaction: alanine is first activated by ATP to form Ala-AMP and then transferred to the acceptor end of tRNA(Ala). Also edits incorrectly charged Ser-tRNA(Ala) and Gly-tRNA(Ala) via its editing domain. The sequence is that of Alanine--tRNA ligase from Methylacidiphilum infernorum (isolate V4) (Methylokorus infernorum (strain V4)).